Here is a 176-residue protein sequence, read N- to C-terminus: Protein SPMIP1 (176 aa).

Positions 55-80 (TLHPKAPLSPPPAPKSAPSKVPSPVP) are disordered. Pro residues predominate over residues 61 to 80 (PLSPPPAPKSAPSKVPSPVP).

The polypeptide is Protein SPMIP1 (Homo sapiens (Human)).